We begin with the raw amino-acid sequence, 220 residues long: Ribosome assembly protein 3 (220 aa).

Residues 1-91 are disordered; the sequence is MSAGDISAIN…VSDVELTDEE (91 aa). Positions 13 to 24 are enriched in basic residues; sequence SVKKNRRRKKRR. Low complexity predominate over residues 29 to 39; the sequence is SSSDSSSSDPS. Residues 41-72 show a composition bias toward basic and acidic residues; it reads ESEKEEIQNGAIEEHVGENGKSDHVFSKGNDE. Acidic residues predominate over residues 73 to 91; it reads DKQEDIAIEVSDVELTDEE. Ser-83 is modified (phosphoserine). Position 88 is a phosphothreonine (Thr-88). Ser-99 bears the Phosphoserine mark.

It belongs to the RSA3 family. As to quaternary structure, associates with nucleolar pre-ribosomal particles. Interacts with DBP6. Together with DBP6, NOP8, URB1 and URB2, forms an RNA-independent complex, which is required during early maturation of nascent 60S ribosomal subunits.

Its subcellular location is the nucleus. The protein resides in the nucleolus. Its function is as follows. Required for efficient biogenesis of the 60S ribosomal subunit. The chain is Ribosome assembly protein 3 (RSA3) from Saccharomyces cerevisiae (strain ATCC 204508 / S288c) (Baker's yeast).